A 367-amino-acid chain; its full sequence is Farnesyl pyrophosphate synthase (367 aa).

Residues Lys-71, Arg-74, and Gln-110 each contribute to the isopentenyl diphosphate site. 2 residues coordinate Mg(2+): Asp-117 and Asp-121. Arg-126 serves as a coordination point for dimethylallyl diphosphate. Residue Arg-127 coordinates isopentenyl diphosphate. Positions 214, 215, 254, 271, and 280 each coordinate dimethylallyl diphosphate.

Belongs to the FPP/GGPP synthase family. As to quaternary structure, homodimer. It depends on Mg(2+) as a cofactor.

It localises to the cytoplasm. The enzyme catalyses isopentenyl diphosphate + dimethylallyl diphosphate = (2E)-geranyl diphosphate + diphosphate. It carries out the reaction isopentenyl diphosphate + (2E)-geranyl diphosphate = (2E,6E)-farnesyl diphosphate + diphosphate. Its pathway is isoprenoid biosynthesis; farnesyl diphosphate biosynthesis; farnesyl diphosphate from geranyl diphosphate and isopentenyl diphosphate: step 1/1. It participates in isoprenoid biosynthesis; geranyl diphosphate biosynthesis; geranyl diphosphate from dimethylallyl diphosphate and isopentenyl diphosphate: step 1/1. Functionally, catalyzes the sequential condensation of isopentenyl pyrophosphate with the allylic pyrophosphates, dimethylallyl pyrophosphate, and then with the resultant geranylpyrophosphate to the ultimate product farnesyl pyrophosphate. This Gallus gallus (Chicken) protein is Farnesyl pyrophosphate synthase (FDPS).